Reading from the N-terminus, the 399-residue chain is Cell division protein DivIB (399 aa).

Disordered regions lie at residues 1 to 23 (MSKD…SEWQ) and 35 to 119 (EEEA…ATKE). Residues 1–133 (MSKDKKNEDK…AKIPGIHILR (133 aa)) lie on the Cytoplasmic side of the membrane. Composition is skewed to basic and acidic residues over residues 35–65 (EEEA…KQDQ) and 75–119 (ESAK…ATKE). The helical transmembrane segment at 134 to 154 (AFTILFPSLLLLFVSAYLLSP) threads the bilayer. Over 155 to 399 (YATMKDIRVE…NQTTQRSSRR (245 aa)) the chain is Extracellular. In terms of domain architecture, POTRA spans 156–226 (ATMKDIRVEG…TKFTIKVKEY (71 aa)). Residues 364-388 (KAKQEAKEAEKKQEEEQKKQEEESN) show a composition bias toward basic and acidic residues. Residues 364-399 (KAKQEAKEAEKKQEEEQKKQEEESNRNQTTQRSSRR) form a disordered region. Positions 389 to 399 (RNQTTQRSSRR) are enriched in polar residues.

This sequence belongs to the FtsQ/DivIB family. DivIB subfamily.

It localises to the cell membrane. In terms of biological role, cell division protein that may be involved in stabilizing or promoting the assembly of the division complex. In Streptococcus pneumoniae serotype 4 (strain ATCC BAA-334 / TIGR4), this protein is Cell division protein DivIB.